The following is a 457-amino-acid chain: Argininosuccinate lyase (457 aa).

Belongs to the lyase 1 family. Argininosuccinate lyase subfamily.

The protein localises to the cytoplasm. It catalyses the reaction 2-(N(omega)-L-arginino)succinate = fumarate + L-arginine. Its pathway is amino-acid biosynthesis; L-arginine biosynthesis; L-arginine from L-ornithine and carbamoyl phosphate: step 3/3. This chain is Argininosuccinate lyase, found in Pectobacterium atrosepticum (strain SCRI 1043 / ATCC BAA-672) (Erwinia carotovora subsp. atroseptica).